Here is a 346-residue protein sequence, read N- to C-terminus: Cyclin-dependent kinase 20 (346 aa).

Positions 4 to 288 constitute a Protein kinase domain; that stretch reads YCILGRIGEG…ASKALLHQYF (285 aa). ATP is bound by residues 10-18 and lysine 33; that span reads IGEGAHGIV. Aspartate 127 acts as the Proton acceptor in catalysis.

It belongs to the protein kinase superfamily. CMGC Ser/Thr protein kinase family. CDC2/CDKX subfamily. As to quaternary structure, monomer. Interacts with TBC1D32 and MAK.

The protein localises to the nucleus. Its subcellular location is the cytoplasm. The protein resides in the cell projection. It is found in the cilium. The catalysed reaction is L-seryl-[protein] + ATP = O-phospho-L-seryl-[protein] + ADP + H(+). It catalyses the reaction L-threonyl-[protein] + ATP = O-phospho-L-threonyl-[protein] + ADP + H(+). Functionally, required for high-level Shh responses in the developing neural tube. Together with TBC1D32, controls the structure of the primary cilium by coordinating assembly of the ciliary membrane and axoneme, allowing GLI2 to be properly activated in response to SHH signaling. Involved in cell growth. Activates CDK2, a kinase involved in the control of the cell cycle, by phosphorylating residue 'Thr-160'. This chain is Cyclin-dependent kinase 20 (CDK20), found in Pongo abelii (Sumatran orangutan).